The primary structure comprises 418 residues: Tryptophan synthase beta chain (418 aa).

A compositionally biased stretch (polar residues) spans 1-17 (MTSTLPNASTPDPSSLQ). The tract at residues 1–23 (MTSTLPNASTPDPSSLQPAVRPG) is disordered. Lysine 111 is subject to N6-(pyridoxal phosphate)lysine.

The protein belongs to the TrpB family. Tetramer of two alpha and two beta chains. The cofactor is pyridoxal 5'-phosphate.

The catalysed reaction is (1S,2R)-1-C-(indol-3-yl)glycerol 3-phosphate + L-serine = D-glyceraldehyde 3-phosphate + L-tryptophan + H2O. Its pathway is amino-acid biosynthesis; L-tryptophan biosynthesis; L-tryptophan from chorismate: step 5/5. The beta subunit is responsible for the synthesis of L-tryptophan from indole and L-serine. This chain is Tryptophan synthase beta chain, found in Synechococcus sp. (strain CC9605).